Here is a 466-residue protein sequence, read N- to C-terminus: tRNA(Ile)-lysidine synthase (466 aa).

Residue 26 to 31 (SGGSDS) coordinates ATP.

It belongs to the tRNA(Ile)-lysidine synthase family.

Its subcellular location is the cytoplasm. The catalysed reaction is cytidine(34) in tRNA(Ile2) + L-lysine + ATP = lysidine(34) in tRNA(Ile2) + AMP + diphosphate + H(+). Functionally, ligates lysine onto the cytidine present at position 34 of the AUA codon-specific tRNA(Ile) that contains the anticodon CAU, in an ATP-dependent manner. Cytidine is converted to lysidine, thus changing the amino acid specificity of the tRNA from methionine to isoleucine. This chain is tRNA(Ile)-lysidine synthase, found in Oceanobacillus iheyensis (strain DSM 14371 / CIP 107618 / JCM 11309 / KCTC 3954 / HTE831).